The primary structure comprises 361 residues: S-adenosylmethionine:tRNA ribosyltransferase-isomerase (361 aa).

It belongs to the QueA family. Monomer.

It is found in the cytoplasm. It carries out the reaction 7-aminomethyl-7-carbaguanosine(34) in tRNA + S-adenosyl-L-methionine = epoxyqueuosine(34) in tRNA + adenine + L-methionine + 2 H(+). It participates in tRNA modification; tRNA-queuosine biosynthesis. Transfers and isomerizes the ribose moiety from AdoMet to the 7-aminomethyl group of 7-deazaguanine (preQ1-tRNA) to give epoxyqueuosine (oQ-tRNA). The sequence is that of S-adenosylmethionine:tRNA ribosyltransferase-isomerase from Mesorhizobium japonicum (strain LMG 29417 / CECT 9101 / MAFF 303099) (Mesorhizobium loti (strain MAFF 303099)).